Here is a 202-residue protein sequence, read N- to C-terminus: LexA repressor (202 aa).

A DNA-binding region (H-T-H motif) is located at residues Arg28 to Lys48. Catalysis depends on for autocatalytic cleavage activity residues Ser119 and Lys156.

Belongs to the peptidase S24 family. In terms of assembly, homodimer.

It catalyses the reaction Hydrolysis of Ala-|-Gly bond in repressor LexA.. Represses a number of genes involved in the response to DNA damage (SOS response), including recA and lexA. Binds to the 16 bp palindromic sequence 5'-CTGTATATATATACAG-3'. In the presence of single-stranded DNA, RecA interacts with LexA causing an autocatalytic cleavage which disrupts the DNA-binding part of LexA, leading to derepression of the SOS regulon and eventually DNA repair. The polypeptide is LexA repressor (Yersinia pseudotuberculosis serotype O:1b (strain IP 31758)).